Reading from the N-terminus, the 144-residue chain is Interleukin-9 (144 aa).

The signal sequence occupies residues 1-18; the sequence is MLVTYILASVLLFSSVLG. Glutamine 19 is modified (pyrrolidone carboxylic acid). Residues asparagine 50, asparagine 78, asparagine 101, and asparagine 114 are each glycosylated (N-linked (GlcNAc...) asparagine).

The protein belongs to the IL-7/IL-9 family. In terms of assembly, interacts with IL9R. Interacts with IL2RG.

The protein localises to the secreted. Its function is as follows. Multifunctional cytokine secreted mainly by T-helper 2 lymphocytes and also mast cells or NKT cells that plays important roles in the immune response against parasites. Affects intestinal epithelial permeability and adaptive immunity. In addition, induces the differentiation of specific T-cell subsets such as IL-17 producing helper T-cells (TH17) and also proliferation and differentiation of mast cells. Mechanistically, exerts its biological effects through a receptor composed of IL9R subunit and a signal transducing subunit IL2RG. Receptor stimulation results in the rapid activation of JAK1 and JAK3 kinase activities leading to STAT1, STAT3 and STAT5-mediated transcriptional programs. Induction of differentiation genes seems to be mediated by STAT1 alone, while protection of cells from apoptosis depends on STAT3 and STAT5. The polypeptide is Interleukin-9 (Il9) (Mus musculus (Mouse)).